The primary structure comprises 266 residues: Putative carbamate hydrolase RutD (266 aa).

The 102-residue stretch at 14 to 115 (PVVVLISGLG…TVLVSVNGWL (102 aa)) folds into the AB hydrolase-1 domain.

This sequence belongs to the AB hydrolase superfamily. Hydrolase RutD family.

The enzyme catalyses carbamate + 2 H(+) = NH4(+) + CO2. Functionally, involved in pyrimidine catabolism. May facilitate the hydrolysis of carbamate, a reaction that can also occur spontaneously. The sequence is that of Putative carbamate hydrolase RutD from Escherichia coli O9:H4 (strain HS).